The chain runs to 358 residues: Uroporphyrinogen decarboxylase (358 aa).

Substrate contacts are provided by residues 29 to 33 (RQAGR), F48, D79, Y155, S210, and H330.

Belongs to the uroporphyrinogen decarboxylase family. Homodimer.

It localises to the cytoplasm. The catalysed reaction is uroporphyrinogen III + 4 H(+) = coproporphyrinogen III + 4 CO2. It participates in porphyrin-containing compound metabolism; protoporphyrin-IX biosynthesis; coproporphyrinogen-III from 5-aminolevulinate: step 4/4. Catalyzes the decarboxylation of four acetate groups of uroporphyrinogen-III to yield coproporphyrinogen-III. The protein is Uroporphyrinogen decarboxylase of Bordetella pertussis (strain Tohama I / ATCC BAA-589 / NCTC 13251).